A 1595-amino-acid chain; its full sequence is Collagen-like protein 2 (1595 aa).

2 N-linked (GlcNAc...) asparagine; by host glycosylation sites follow: Asn87 and Asn134. Collagen-like domains are found at residues 97–155, 175–233, 236–295, and 299–358; these read LRGE…NGDV, QVGL…KGEG, GSKG…KGDI, and GIKG…KGMK. Residues 181–190 are compositionally biased toward low complexity; that stretch reads SQGDQGYKGD. Disordered stretches follow at residues 181 to 577 and 604 to 1326; these read SQGD…SPDL and TDIK…GIKG. 14 stretches are compositionally biased toward basic and acidic residues: residues 191–200, 209–448, 456–466, 474–501, 510–561, 606–615, 622–702, 718–825, 832–883, 895–1041, 1048–1098, 1107–1151, 1159–1250, and 1265–1300; these read QGSKGDKGQK, KGDK…KGTK, YKGDIGDKGIK, DKGD…DKGY, DNGE…DKGE, IKGEKGDKGE, KGDK…DKGD, KGDK…DKGI, KGDK…KGFK, KGNK…DQGT, KGDK…KGIK, NKGD…KGDQ, and KGDK…DQGI. Asn274, Asn280, and Asn286 each carry an N-linked (GlcNAc...) asparagine; by host glycan. 4 N-linked (GlcNAc...) asparagine; by host glycosylation sites follow: Asn373, Asn382, Asn400, and Asn409. Collagen-like domains lie at 380–559, 608–907, 920–1039, 1043–1102, and 1128–1307; these read GDNG…KGDK, GEKG…KGEN, GDKG…KGDK, GTNG…KGET, and GDQG…SGAS. Asn1345, Asn1420, and Asn1545 each carry an N-linked (GlcNAc...) asparagine; by host glycan. A disordered region spans residues 1538-1585; it reads SAFDKGGNGSIRFNPPSSGTKGSGGGGSVQGGGGTIPNDGYPGGNGGP. Positions 1558–1585 are enriched in gly residues; the sequence is KGSGGGGSVQGGGGTIPNDGYPGGNGGP.

May be hydroxylated on lysine by the viral-encoded procollagen-lysine,2-oxoglutarate 5-dioxygenase.

It is found in the virion. Functionally, may participate in the formation of a layer of cross-linked glycosylated fibrils at the viral surface thus giving it a hairy-like appearance. The polypeptide is Collagen-like protein 2 (Acanthamoeba polyphaga (Amoeba)).